The sequence spans 262 residues: MAVVGVPGWIGSSAANETGQRWMSQAAGQLRLGVPCWMSQFAGRSREIIHTLGADHNFNGQWFRDRCFEAGSAPIVFNITGDLVSYSKDVPLFFMYGDTPNEYVQLNIHGVTMYGRGGNGGSNSPGSAGGHCIQNNIGGRLRINNGGAIAGGGGGGGGGYWNASITRYRYRYVVGGGGGRPFGAAGGYSGGSASTAGTLTGAGIGSKPGNAIYGGNGGNVGSAGGAFGGISGSRYGGGAAGYAVIGSAPTWQNVGAIYGPRV.

Short sequence motifs (GRM) lie at residues 115–122 (GRGGNGGS), 124–131 (SPGSAGGH), 151–164 (GGGGGGGGGYWNAS), 167–180 (RYRYRYVVGGGGGR), 183–187 (GAAGG), 188–194 (YSGGSAS), 200–207 (TGAGIGSK), 213–219 (YGGNGGN), 222–227 (SAGGAF), and 231–242 (SGSRYGGGAAGY).

This sequence belongs to the receptor-recognizing protein gp38 family.

The protein resides in the virion. Its function is as follows. Receptor binding protein (RBP) that is at the tip of the long tail fibers and serves as the phage recognition site for the attachment host receptor. Probably uses the host receptor OmpA. The chain is Receptor-recognizing protein gp38 (38) from Enterobacteria phage M1 (Bacteriophage M1).